We begin with the raw amino-acid sequence, 1045 residues long: FERM, ARHGEF and pleckstrin domain-containing protein 1 (1045 aa).

The tract at residues 1 to 37 (MGEIEQRPTPGSRLGAPENSGISTLERGQKPPPTPSG) is disordered. S20 and S23 each carry phosphoserine. T24 carries the phosphothreonine modification. One can recognise an FERM domain in the interval 40–320 (VSIKIQMLDD…EHHAFFRLFE (281 aa)). Residues S340, S373, S389, S403, S418, S427, and S433 each carry the phosphoserine modification. Residues 392–534 (SASLTFGEGA…TDDEDEGRRK (143 aa)) are disordered. Composition is skewed to polar residues over residues 471–489 (TGSLTGSPHLSELSVNSQG) and 496–511 (VTLSPNLSPDTKQASP). Phosphoserine is present on residues S510 and S514. Positions 540-730 (KAYFIAKEVS…TEMVAQLHGT (191 aa)) constitute a DH domain. Positions 759–856 (EFIRLGSLSK…WVEDIQMAID (98 aa)) constitute a PH 1 domain. Phosphoserine occurs at positions 833, 872, and 878. Positions 866–902 (PEFLASSPPDNKSPDEATAADQESEDDLSASRTSLER) are disordered. T883 carries the phosphothreonine modification. Phosphoserine is present on residues S889, S896, and S899. The region spanning 932–1029 (ENQLSGNLLR…WMEVIRSATS (98 aa)) is the PH 2 domain.

As to quaternary structure, interacts with CADM1. Interacts with RAC1.

It localises to the cell membrane. Its subcellular location is the synapse. The protein localises to the synaptosome. It is found in the cytoplasm. The protein resides in the cytosol. It localises to the cell projection. Its subcellular location is the filopodium. The protein localises to the dendrite. It is found in the dendritic spine. Its function is as follows. Functions as a guanine nucleotide exchange factor for RAC1. May play a role in semaphorin signaling. Plays a role in the assembly and disassembly of dendritic filopodia, the formation of dendritic spines, regulation of dendrite length and ultimately the formation of synapses. The sequence is that of FERM, ARHGEF and pleckstrin domain-containing protein 1 (FARP1) from Pongo abelii (Sumatran orangutan).